The sequence spans 185 residues: MINEIKSDAQTRMDKCVESTKTQMAKVRTGRAHPSLLDTIQVPYYGSLTPLKQVASVSIGDARTLTVSVFDRTMIAAVEKAIMSSDLGLNPMSAGATIRIPLPALTEERRKDLIKVVRAEAENGRIAIRNVRRDANSNVKELEKEKECTEDDVRRSEDDVQKLTDAHIKLVDDVLAAKEKELMEF.

It belongs to the RRF family.

Its subcellular location is the cytoplasm. Responsible for the release of ribosomes from messenger RNA at the termination of protein biosynthesis. May increase the efficiency of translation by recycling ribosomes from one round of translation to another. In Shewanella halifaxensis (strain HAW-EB4), this protein is Ribosome-recycling factor.